The following is a 63-amino-acid chain: Large ribosomal subunit protein uL29 (63 aa).

This sequence belongs to the universal ribosomal protein uL29 family.

This is Large ribosomal subunit protein uL29 from Vibrio cholerae serotype O1 (strain ATCC 39541 / Classical Ogawa 395 / O395).